The primary structure comprises 113 residues: MHELSIATDLINTALETAKQNNAREVISITVEIGELALINPEQLQFMYQVLTEENLLKGSELIIINVPAVAECQCGYKGPVPDKTTCACPNCGLTMRAVEGRDICLKTMEIEV.

A Ni(2+)-binding site is contributed by H2. 4 residues coordinate Zn(2+): C73, C75, C89, and C92.

The protein belongs to the HypA/HybF family.

Involved in the maturation of [NiFe] hydrogenases. Required for nickel insertion into the metal center of the hydrogenase. The protein is Hydrogenase maturation factor HypA of Methanocella arvoryzae (strain DSM 22066 / NBRC 105507 / MRE50).